The following is a 122-amino-acid chain: Large ribosomal subunit protein uL14c (122 aa).

Belongs to the universal ribosomal protein uL14 family. Part of the 50S ribosomal subunit.

The protein localises to the plastid. It is found in the chloroplast. Its function is as follows. Binds to 23S rRNA. This Phaseolus vulgaris (Kidney bean) protein is Large ribosomal subunit protein uL14c.